The sequence spans 448 residues: Adenylosuccinate synthetase (448 aa).

Residues 22–28 (GDEGKGK) and 50–52 (GHT) each bind GTP. The active-site Proton acceptor is the Asp23. The Mg(2+) site is built by Asp23 and Gly50. IMP-binding positions include 23 to 26 (DEGK), 48 to 51 (NAGH), Thr139, Arg153, Gln234, Thr249, and Arg321. Residue His51 is the Proton donor of the active site. Position 317–323 (317–323 (SVTGRPR)) interacts with substrate. GTP is bound by residues Arg323, 349–351 (KLD), and 431–433 (STG).

It belongs to the adenylosuccinate synthetase family. As to quaternary structure, homodimer. Mg(2+) serves as cofactor.

It is found in the cytoplasm. It catalyses the reaction IMP + L-aspartate + GTP = N(6)-(1,2-dicarboxyethyl)-AMP + GDP + phosphate + 2 H(+). It participates in purine metabolism; AMP biosynthesis via de novo pathway; AMP from IMP: step 1/2. Plays an important role in the de novo pathway of purine nucleotide biosynthesis. Catalyzes the first committed step in the biosynthesis of AMP from IMP. The protein is Adenylosuccinate synthetase of Paraburkholderia phytofirmans (strain DSM 17436 / LMG 22146 / PsJN) (Burkholderia phytofirmans).